We begin with the raw amino-acid sequence, 669 residues long: Putative heme-binding protein rrnAC3100 (669 aa).

Residue His-181 coordinates heme. Disordered stretches follow at residues 260–351 (RVPT…PDVS) and 451–477 (LGGS…ESSQ). One can recognise an ABM domain in the interval 579–667 (GTMGMFYTVK…VLADRPRHVF (89 aa)).

In the N-terminal section; belongs to the ChdC family.

The polypeptide is Putative heme-binding protein rrnAC3100 (Haloarcula marismortui (strain ATCC 43049 / DSM 3752 / JCM 8966 / VKM B-1809) (Halobacterium marismortui)).